The chain runs to 255 residues: Geranylgeranylglyceryl phosphate synthase (255 aa).

Residues Asp-31 and Ser-60 each coordinate Mg(2+). Residues 179–185 (YLEAGSG), 211–212 (GG), and 233–234 (GT) each bind sn-glycerol 1-phosphate.

Belongs to the GGGP/HepGP synthase family. Group II subfamily. It depends on Mg(2+) as a cofactor.

Its subcellular location is the cytoplasm. It carries out the reaction sn-glycerol 1-phosphate + (2E,6E,10E)-geranylgeranyl diphosphate = sn-3-O-(geranylgeranyl)glycerol 1-phosphate + diphosphate. It participates in membrane lipid metabolism; glycerophospholipid metabolism. Functionally, prenyltransferase that catalyzes the transfer of the geranylgeranyl moiety of geranylgeranyl diphosphate (GGPP) to the C3 hydroxyl of sn-glycerol-1-phosphate (G1P). This reaction is the first ether-bond-formation step in the biosynthesis of archaeal membrane lipids. The sequence is that of Geranylgeranylglyceryl phosphate synthase from Methanothrix thermoacetophila (strain DSM 6194 / JCM 14653 / NBRC 101360 / PT) (Methanosaeta thermophila).